The chain runs to 229 residues: Germin-like protein subfamily 1 member 7 (229 aa).

The N-terminal stretch at 1–24 is a signal peptide; the sequence is MEGFLRFLVAKAILLALASSFVSC. Cys-34 and Cys-50 are joined by a disulfide. The Cupin type-1 domain maps to 64-215; it reads SGLNIAGNTI…AFQLDVNVVK (152 aa). The N-linked (GlcNAc...) asparagine glycan is linked to Asn-79. Positions 112, 114, 119, and 161 each coordinate Mn(2+).

Belongs to the germin family. In terms of assembly, oligomer (believed to be a pentamer but probably hexamer).

It is found in the secreted. The protein resides in the extracellular space. It localises to the apoplast. Functionally, may play a role in plant defense. Probably has no oxalate oxidase activity even if the active site is conserved. The protein is Germin-like protein subfamily 1 member 7 of Arabidopsis thaliana (Mouse-ear cress).